A 1083-amino-acid polypeptide reads, in one-letter code: Chitin synthase 2 (1083 aa).

Composition is skewed to basic and acidic residues over residues 1-10 and 18-30; these read MSSEREERTF and DDVRENISNENQE. 2 disordered regions span residues 1-248 and 260-294; these read MSSE…IADD and DDDVFAPESDLSDARPHPVDRSSYMSSESQDTLNE. Residue N23 is glycosylated (N-linked (GlcNAc...) asparagine). Polar residues-rich tracts occupy residues 38–49 and 61–70; these read SYASSMAESQTL and AKLQNKNRTS. The N-linked (GlcNAc...) asparagine glycan is linked to N67. Composition is skewed to basic and acidic residues over residues 78–100 and 117–128; these read LPRDLPEIPDGISDRRRVHKEQQ and RLRDVNSHDKLP. Polar residues-rich tracts occupy residues 132–148, 177–191, and 282–292; these read SPRNLNYQPSVRSSRSG, RPWTPSSRVSGFTRS, and SYMSSESQDTL. The N-linked (GlcNAc...) asparagine glycan is linked to N417. Transmembrane regions (helical) follow at residues 708–728, 747–767, 785–805, 820–840, 860–880, 889–909, 987–1007, and 1020–1040; these read WLNGAFFAAVYSLVHFKQIWF, FIQLMFTFFSLANFYLTFYFV, TVIFHILRYACVLLISTQFIL, ISMIIYSIIMVYTTFATFYII, NMIVSILSTIGMYFIMSILYL, SAQYFILLPSYICTLQVYAFC, YLVLTWMIGNGILGMAVSEIY, and FLLWSVAALAVFRAIGSTTFA.

The protein belongs to the chitin synthase family. Class II subfamily.

The protein localises to the cell membrane. The enzyme catalyses [(1-&gt;4)-N-acetyl-beta-D-glucosaminyl](n) + UDP-N-acetyl-alpha-D-glucosamine = [(1-&gt;4)-N-acetyl-beta-D-glucosaminyl](n+1) + UDP + H(+). Its function is as follows. Polymerizes chitin, a structural polymer of the cell wall and septum, by transferring the sugar moiety of UDP-GlcNAc to the non-reducing end of the growing chitin polymer. Plays a critical role in cell wall integrity and virulence. In Fusarium oxysporum f. sp. lycopersici (strain 4287 / CBS 123668 / FGSC 9935 / NRRL 34936) (Fusarium vascular wilt of tomato), this protein is Chitin synthase 2.